Reading from the N-terminus, the 507-residue chain is Histidine ammonia-lyase (507 aa).

Residues 142 to 144 (ASG) constitute a cross-link (5-imidazolinone (Ala-Gly)). Residue Ser-143 is modified to 2,3-didehydroalanine (Ser).

This sequence belongs to the PAL/histidase family. Contains an active site 4-methylidene-imidazol-5-one (MIO), which is formed autocatalytically by cyclization and dehydration of residues Ala-Ser-Gly.

The protein localises to the cytoplasm. It catalyses the reaction L-histidine = trans-urocanate + NH4(+). The protein operates within amino-acid degradation; L-histidine degradation into L-glutamate; N-formimidoyl-L-glutamate from L-histidine: step 1/3. This is Histidine ammonia-lyase from Maricaulis maris (strain MCS10) (Caulobacter maris).